A 149-amino-acid chain; its full sequence is Large ribosomal subunit protein uL24 (149 aa).

It belongs to the universal ribosomal protein uL24 family. In terms of assembly, part of the 50S ribosomal subunit.

Functionally, one of two assembly initiator proteins, it binds directly to the 5'-end of the 23S rRNA, where it nucleates assembly of the 50S subunit. Its function is as follows. Located at the polypeptide exit tunnel on the outside of the subunit. This chain is Large ribosomal subunit protein uL24, found in Hyperthermus butylicus (strain DSM 5456 / JCM 9403 / PLM1-5).